The following is a 255-amino-acid chain: 4-diphosphocytidyl-2-C-methyl-D-erythritol kinase (255 aa).

Lys-9 is a catalytic residue. ATP is bound at residue 95 to 105; the sequence is PSQAGLGGGSS. The active site involves Asp-137.

The protein belongs to the GHMP kinase family. IspE subfamily.

It carries out the reaction 4-CDP-2-C-methyl-D-erythritol + ATP = 4-CDP-2-C-methyl-D-erythritol 2-phosphate + ADP + H(+). It participates in isoprenoid biosynthesis; isopentenyl diphosphate biosynthesis via DXP pathway; isopentenyl diphosphate from 1-deoxy-D-xylulose 5-phosphate: step 3/6. Functionally, catalyzes the phosphorylation of the position 2 hydroxy group of 4-diphosphocytidyl-2C-methyl-D-erythritol. The chain is 4-diphosphocytidyl-2-C-methyl-D-erythritol kinase from Sulfurovum sp. (strain NBC37-1).